Here is a 130-residue protein sequence, read N- to C-terminus: Small ribosomal subunit protein uS8 (130 aa).

It belongs to the universal ribosomal protein uS8 family. Part of the 30S ribosomal subunit.

One of the primary rRNA binding proteins, it binds directly to 16S rRNA central domain where it helps coordinate assembly of the platform of the 30S subunit. This Cenarchaeum symbiosum (strain A) protein is Small ribosomal subunit protein uS8.